Consider the following 758-residue polypeptide: 5-methyltetrahydropteroyltriglutamate--homocysteine methyltransferase (758 aa).

5-methyltetrahydropteroyltri-L-glutamate contacts are provided by residues 17–20 (RELK) and Lys-117. L-homocysteine contacts are provided by residues 434 to 436 (IGS) and Glu-487. L-methionine contacts are provided by residues 434–436 (IGS) and Glu-487. Residues 518–519 (RC) and Trp-564 contribute to the 5-methyltetrahydropteroyltri-L-glutamate site. L-homocysteine is bound at residue Asp-602. L-methionine is bound at residue Asp-602. Residue Glu-608 participates in 5-methyltetrahydropteroyltri-L-glutamate binding. Positions 644, 646, and 668 each coordinate Zn(2+). Catalysis depends on His-697, which acts as the Proton donor. Cys-729 is a binding site for Zn(2+).

Belongs to the vitamin-B12 independent methionine synthase family. It depends on Zn(2+) as a cofactor.

The catalysed reaction is 5-methyltetrahydropteroyltri-L-glutamate + L-homocysteine = tetrahydropteroyltri-L-glutamate + L-methionine. Its pathway is amino-acid biosynthesis; L-methionine biosynthesis via de novo pathway; L-methionine from L-homocysteine (MetE route): step 1/1. Functionally, catalyzes the transfer of a methyl group from 5-methyltetrahydrofolate to homocysteine resulting in methionine formation. The chain is 5-methyltetrahydropteroyltriglutamate--homocysteine methyltransferase from Yersinia pestis bv. Antiqua (strain Antiqua).